We begin with the raw amino-acid sequence, 357 residues long: Holliday junction branch migration complex subunit RuvB (357 aa).

The interval 1–20 is disordered; sequence MDDHDDSPVSPSFLKSDGEI. The interval 1–185 is large ATPase domain (RuvB-L); it reads MDDHDDSPVS…FGFTGHMDFY (185 aa). ATP contacts are provided by residues Leu-24, Arg-25, Gly-66, Lys-69, Thr-70, Ser-71, 132 to 134, Arg-175, Tyr-185, and Arg-222; that span reads EDF. Residue Thr-70 coordinates Mg(2+). The small ATPAse domain (RuvB-S) stretch occupies residues 186-256; sequence EPGELLRILE…VARAALEVYD (71 aa). Residues 259–357 form a head domain (RuvB-H) region; sequence TLGLDRLDRA…TSQPTLDLFD (99 aa). Residues Arg-314 and Arg-319 each coordinate DNA.

The protein belongs to the RuvB family. As to quaternary structure, homohexamer. Forms an RuvA(8)-RuvB(12)-Holliday junction (HJ) complex. HJ DNA is sandwiched between 2 RuvA tetramers; dsDNA enters through RuvA and exits via RuvB. An RuvB hexamer assembles on each DNA strand where it exits the tetramer. Each RuvB hexamer is contacted by two RuvA subunits (via domain III) on 2 adjacent RuvB subunits; this complex drives branch migration. In the full resolvosome a probable DNA-RuvA(4)-RuvB(12)-RuvC(2) complex forms which resolves the HJ.

Its subcellular location is the cytoplasm. The catalysed reaction is ATP + H2O = ADP + phosphate + H(+). Its function is as follows. The RuvA-RuvB-RuvC complex processes Holliday junction (HJ) DNA during genetic recombination and DNA repair, while the RuvA-RuvB complex plays an important role in the rescue of blocked DNA replication forks via replication fork reversal (RFR). RuvA specifically binds to HJ cruciform DNA, conferring on it an open structure. The RuvB hexamer acts as an ATP-dependent pump, pulling dsDNA into and through the RuvAB complex. RuvB forms 2 homohexamers on either side of HJ DNA bound by 1 or 2 RuvA tetramers; 4 subunits per hexamer contact DNA at a time. Coordinated motions by a converter formed by DNA-disengaged RuvB subunits stimulates ATP hydrolysis and nucleotide exchange. Immobilization of the converter enables RuvB to convert the ATP-contained energy into a lever motion, pulling 2 nucleotides of DNA out of the RuvA tetramer per ATP hydrolyzed, thus driving DNA branch migration. The RuvB motors rotate together with the DNA substrate, which together with the progressing nucleotide cycle form the mechanistic basis for DNA recombination by continuous HJ branch migration. Branch migration allows RuvC to scan DNA until it finds its consensus sequence, where it cleaves and resolves cruciform DNA. The protein is Holliday junction branch migration complex subunit RuvB of Nocardia farcinica (strain IFM 10152).